A 284-amino-acid polypeptide reads, in one-letter code: Prolyl 4-hydroxylase subunit alpha (284 aa).

Positions 169–284 (NFNSIKTQTQ…PRIAITTWIY (116 aa)) constitute a Fe2OG dioxygenase domain. 3 residues coordinate Fe cation: H191, D193, and H266. R276 contributes to the 2-oxoglutarate binding site.

This sequence belongs to the P4HA family. In terms of assembly, heterotetramer of two alpha-1 chains and two beta chains (the beta chain is the multi-functional PDI). Requires Fe(2+) as cofactor. L-ascorbate is required as a cofactor.

It is found in the cytoplasm. The catalysed reaction is L-prolyl-[Skp1 protein] + 2-oxoglutarate + O2 = trans-4-hydroxy-L-prolyl-[Skp1 protein] + succinate + CO2. With respect to regulation, inhibited by the prolyl-hydroxylase inhibitors alpha,alpha'-dipyridyl and ethyl 3,4-dihydroxybenzoate. Its function is as follows. Catalyzes the post-translational formation of 4-hydroxyproline. Probably hydroxylates skp1 on Pro-143. The polypeptide is Prolyl 4-hydroxylase subunit alpha (phyA) (Dictyostelium discoideum (Social amoeba)).